The sequence spans 277 residues: S-formylglutathione hydrolase FrmB (277 aa).

Catalysis depends on charge relay system residues Ser145, Asp221, and His254.

This sequence belongs to the esterase D family.

The catalysed reaction is S-formylglutathione + H2O = formate + glutathione + H(+). Serine hydrolase involved in the detoxification of formaldehyde. Hydrolyzes S-formylglutathione to glutathione and formate. The polypeptide is S-formylglutathione hydrolase FrmB (frmB) (Escherichia coli (strain ATCC 8739 / DSM 1576 / NBRC 3972 / NCIMB 8545 / WDCM 00012 / Crooks)).